The chain runs to 254 residues: Myeloblastin (254 aa).

The first 27 residues, 1–27, serve as a signal peptide directing secretion; that stretch reads MSGSYPSPKGIHPFLLLALVVGGAVQA. A propeptide spanning residues 28–29 is cleaved from the precursor; it reads SK. The Peptidase S1 domain occupies 30 to 250; that stretch reads IVGGHEARPH…YVDWIQNVLR (221 aa). Cys58 and Cys74 are oxidised to a cystine. Active-site charge relay system residues include His73 and Asp120. N-linked (GlcNAc...) asparagine glycans are attached at residues Asn127 and Asn176. 3 disulfides stabilise this stretch: Cys154–Cys211, Cys184–Cys190, and Cys201–Cys226. Residue Ser205 is the Charge relay system of the active site. A propeptide spanning residues 251-254 is cleaved from the precursor; the sequence is GAEP.

Belongs to the peptidase S1 family. Elastase subfamily. In terms of assembly, may form dimers. Interacts with CD177; the interaction tethers PRTN3 to the cell surface; the interaction is direct. Interacts with SERPINB1. Interacts with ADGRG3.

It localises to the lysosome. Its subcellular location is the secreted. It is found in the cell membrane. The protein localises to the membrane raft. The catalysed reaction is Hydrolysis of proteins, including elastin, by preferential cleavage: -Ala-|-Xaa- &gt; -Val-|-Xaa-.. Functionally, serine protease that degrades elastin, fibronectin, laminin, vitronectin, and collagen types I, III, and IV (in vitro). By cleaving and activating receptor F2RL1/PAR-2, enhances endothelial cell barrier function and thus vascular integrity during neutrophil transendothelial migration. May play a role in neutrophil transendothelial migration, probably when associated with CD177. Triggers inflammatory processes in neutrophils by interacting with ADGRG3 upstream of F2RL1/PAR2 activation. This is Myeloblastin (Prtn3) from Mus musculus (Mouse).